We begin with the raw amino-acid sequence, 538 residues long: uncharacterized protein (538 aa).

An N-terminal signal peptide occupies residues 1-17 (MNLQILLLLLLFCHVAA). A glycan (N-linked (GlcNAc...) asparagine) is linked at asparagine 115.

This is an uncharacterized protein from Caenorhabditis elegans.